Reading from the N-terminus, the 161-residue chain is Nucleotide-binding protein azo2183 (161 aa).

It belongs to the YajQ family.

Functionally, nucleotide-binding protein. The protein is Nucleotide-binding protein azo2183 of Azoarcus sp. (strain BH72).